We begin with the raw amino-acid sequence, 339 residues long: DNA-directed RNA polymerase subunit alpha (339 aa).

Residues 1–233 form an alpha N-terminal domain (alpha-NTD) region; the sequence is MVREEITGST…DLFLPFIHTE (233 aa). Positions 266-339 are alpha C-terminal domain (alpha-CTD); sequence GIPLNCIFID…IDLPKNKFSL (74 aa).

It belongs to the RNA polymerase alpha chain family. As to quaternary structure, in plastids the minimal PEP RNA polymerase catalytic core is composed of four subunits: alpha, beta, beta', and beta''. When a (nuclear-encoded) sigma factor is associated with the core the holoenzyme is formed, which can initiate transcription.

The protein localises to the plastid. Its subcellular location is the chloroplast. It catalyses the reaction RNA(n) + a ribonucleoside 5'-triphosphate = RNA(n+1) + diphosphate. Functionally, DNA-dependent RNA polymerase catalyzes the transcription of DNA into RNA using the four ribonucleoside triphosphates as substrates. This chain is DNA-directed RNA polymerase subunit alpha, found in Sorghum bicolor (Sorghum).